A 228-amino-acid polypeptide reads, in one-letter code: Ribose-5-phosphate isomerase A (228 aa).

Residues 28-31 (TGST), 84-87 (DGAD), and 97-100 (KGGG) contribute to the substrate site. Residue Glu106 is the Proton acceptor of the active site. Substrate is bound at residue Lys124.

Belongs to the ribose 5-phosphate isomerase family. Homodimer.

The enzyme catalyses aldehydo-D-ribose 5-phosphate = D-ribulose 5-phosphate. It functions in the pathway carbohydrate degradation; pentose phosphate pathway; D-ribose 5-phosphate from D-ribulose 5-phosphate (non-oxidative stage): step 1/1. Functionally, catalyzes the reversible conversion of ribose-5-phosphate to ribulose 5-phosphate. This is Ribose-5-phosphate isomerase A from Levilactobacillus brevis (strain ATCC 367 / BCRC 12310 / CIP 105137 / JCM 1170 / LMG 11437 / NCIMB 947 / NCTC 947) (Lactobacillus brevis).